The following is a 342-amino-acid chain: Aspartate carbamoyltransferase catalytic subunit (342 aa).

Carbamoyl phosphate is bound by residues Arg-54 and Thr-55. Lys-82 lines the L-aspartate pocket. Carbamoyl phosphate is bound by residues Arg-104, His-134, and Gln-137. Arg-177 and Arg-232 together coordinate L-aspartate. Carbamoyl phosphate is bound by residues Gly-277 and Pro-278.

The protein belongs to the aspartate/ornithine carbamoyltransferase superfamily. ATCase family. In terms of assembly, heterododecamer (2C3:3R2) of six catalytic PyrB chains organized as two trimers (C3), and six regulatory PyrI chains organized as three dimers (R2).

The enzyme catalyses carbamoyl phosphate + L-aspartate = N-carbamoyl-L-aspartate + phosphate + H(+). It functions in the pathway pyrimidine metabolism; UMP biosynthesis via de novo pathway; (S)-dihydroorotate from bicarbonate: step 2/3. Its function is as follows. Catalyzes the condensation of carbamoyl phosphate and aspartate to form carbamoyl aspartate and inorganic phosphate, the committed step in the de novo pyrimidine nucleotide biosynthesis pathway. This is Aspartate carbamoyltransferase catalytic subunit from Pseudarthrobacter chlorophenolicus (strain ATCC 700700 / DSM 12829 / CIP 107037 / JCM 12360 / KCTC 9906 / NCIMB 13794 / A6) (Arthrobacter chlorophenolicus).